The chain runs to 188 residues: Elongation factor P (188 aa).

The protein belongs to the elongation factor P family.

The protein localises to the cytoplasm. The protein operates within protein biosynthesis; polypeptide chain elongation. Its function is as follows. Involved in peptide bond synthesis. Stimulates efficient translation and peptide-bond synthesis on native or reconstituted 70S ribosomes in vitro. Probably functions indirectly by altering the affinity of the ribosome for aminoacyl-tRNA, thus increasing their reactivity as acceptors for peptidyl transferase. The chain is Elongation factor P from Sulfurimonas denitrificans (strain ATCC 33889 / DSM 1251) (Thiomicrospira denitrificans (strain ATCC 33889 / DSM 1251)).